We begin with the raw amino-acid sequence, 689 residues long: DNA topoisomerase 1 (689 aa).

In terms of domain architecture, Toprim spans Asp-3–Ile-113. Glu-9 and Asp-82 together coordinate Mg(2+). One can recognise a Topo IA-type catalytic domain in the interval Glu-129 to Glu-557. The segment at Ser-163–Gln-168 is interaction with DNA. The active-site O-(5'-phospho-DNA)-tyrosine intermediate is Tyr-298. C4-type zinc fingers lie at residues Cys-577–Cys-603, Cys-617–Cys-645, and Cys-658–Cys-681.

The protein belongs to the type IA topoisomerase family. Monomer. It depends on Mg(2+) as a cofactor.

The catalysed reaction is ATP-independent breakage of single-stranded DNA, followed by passage and rejoining.. Functionally, releases the supercoiling and torsional tension of DNA, which is introduced during the DNA replication and transcription, by transiently cleaving and rejoining one strand of the DNA duplex. Introduces a single-strand break via transesterification at a target site in duplex DNA. The scissile phosphodiester is attacked by the catalytic tyrosine of the enzyme, resulting in the formation of a DNA-(5'-phosphotyrosyl)-enzyme intermediate and the expulsion of a 3'-OH DNA strand. The free DNA strand then undergoes passage around the unbroken strand, thus removing DNA supercoils. Finally, in the religation step, the DNA 3'-OH attacks the covalent intermediate to expel the active-site tyrosine and restore the DNA phosphodiester backbone. This is DNA topoisomerase 1 from Staphylococcus epidermidis (strain ATCC 35984 / DSM 28319 / BCRC 17069 / CCUG 31568 / BM 3577 / RP62A).